The following is a 264-amino-acid chain: Caffeoyl-CoA O-methyltransferase 2 (264 aa).

A compositionally biased stretch (low complexity) spans 1-20; sequence MATTATEATKTTAPAQEQQA. The disordered stretch occupies residues 1-37; that stretch reads MATTATEATKTTAPAQEQQANGNGNGEQKTRHSEVGH. The span at 28-37 shows a compositional bias: basic and acidic residues; the sequence is QKTRHSEVGH. Lysine 38 provides a ligand contact to substrate. S-adenosyl-L-methionine contacts are provided by residues threonine 80, glutamate 102, 104 to 105, serine 110, aspartate 128, and alanine 157; that span reads GV. Aspartate 180 contributes to the substrate binding site. Aspartate 180 contributes to the a divalent metal cation binding site. Aspartate 182 contributes to the S-adenosyl-L-methionine binding site. Aspartate 206 and asparagine 207 together coordinate a divalent metal cation. Residue asparagine 211 participates in substrate binding.

It belongs to the class I-like SAM-binding methyltransferase superfamily. Cation-dependent O-methyltransferase family. CCoAMT subfamily. A divalent metal cation serves as cofactor.

The catalysed reaction is (E)-caffeoyl-CoA + S-adenosyl-L-methionine = (E)-feruloyl-CoA + S-adenosyl-L-homocysteine + H(+). It participates in aromatic compound metabolism; phenylpropanoid biosynthesis. In terms of biological role, methylates caffeoyl-CoA to feruloyl-CoA and 5-hydroxyferuloyl-CoA to sinapoyl-CoA. Plays a role in the synthesis of feruloylated polysaccharides. Involved in the reinforcement of the plant cell wall. Also involved in the responding to wounding or pathogen challenge by the increased formation of cell wall-bound ferulic acid polymers. The polypeptide is Caffeoyl-CoA O-methyltransferase 2 (CCOAOMT2) (Zea mays (Maize)).